Reading from the N-terminus, the 189-residue chain is Elongation factor P (189 aa).

Lys34 carries the N6-(3,6-diaminohexanoyl)-5-hydroxylysine modification.

Belongs to the elongation factor P family. In terms of processing, may be beta-lysylated on the epsilon-amino group of Lys-34 by the combined action of EpmA and EpmB, and then hydroxylated on the C5 position of the same residue by EpmC (if this protein is present). Lysylation is critical for the stimulatory effect of EF-P on peptide-bond formation. The lysylation moiety may extend toward the peptidyltransferase center and stabilize the terminal 3-CCA end of the tRNA. Hydroxylation of the C5 position on Lys-34 may allow additional potential stabilizing hydrogen-bond interactions with the P-tRNA.

It is found in the cytoplasm. It participates in protein biosynthesis; polypeptide chain elongation. Involved in peptide bond synthesis. Alleviates ribosome stalling that occurs when 3 or more consecutive Pro residues or the sequence PPG is present in a protein, possibly by augmenting the peptidyl transferase activity of the ribosome. Modification of Lys-34 is required for alleviation. This Francisella tularensis subsp. tularensis (strain FSC 198) protein is Elongation factor P.